The chain runs to 197 residues: ATP-dependent Clp protease proteolytic subunit 1 (197 aa).

Ser-100 acts as the Nucleophile in catalysis. His-125 is a catalytic residue.

This sequence belongs to the peptidase S14 family. Fourteen ClpP subunits assemble into 2 heptameric rings which stack back to back to give a disk-like structure with a central cavity, resembling the structure of eukaryotic proteasomes.

Its subcellular location is the cytoplasm. It catalyses the reaction Hydrolysis of proteins to small peptides in the presence of ATP and magnesium. alpha-casein is the usual test substrate. In the absence of ATP, only oligopeptides shorter than five residues are hydrolyzed (such as succinyl-Leu-Tyr-|-NHMec, and Leu-Tyr-Leu-|-Tyr-Trp, in which cleavage of the -Tyr-|-Leu- and -Tyr-|-Trp bonds also occurs).. Cleaves peptides in various proteins in a process that requires ATP hydrolysis. Has a chymotrypsin-like activity. Plays a major role in the degradation of misfolded proteins. This Gloeobacter violaceus (strain ATCC 29082 / PCC 7421) protein is ATP-dependent Clp protease proteolytic subunit 1.